Reading from the N-terminus, the 452-residue chain is Neuronal acetylcholine receptor subunit alpha-5 (452 aa).

Positions 1 to 27 are cleaved as a signal peptide; it reads MVQLLAGRWRPTGARRGTRGGLPELSS. At 28–239 the chain is on the extracellular side; the sequence is AAKHEDSLFR…VIKRLPLFYT (212 aa). Residues asparagine 140, asparagine 168, and asparagine 214 are each glycosylated (N-linked (GlcNAc...) asparagine). The cysteines at positions 155 and 169 are disulfide-linked. Residues cysteine 219 and cysteine 220 are joined by a disulfide bond. A run of 3 helical transmembrane segments spans residues 240–260, 269–289, and 302–322; these read LFLI…FYLP, LCTS…EIIP, and LVFT…AINI. Over 323–414 the chain is Cytoplasmic; the sequence is HHRSSSTHNA…KFIAQVLDRM (92 aa). The helical transmembrane segment at 415–435 threads the bilayer; the sequence is FLWTFLLVSIIGTLGLFVPVI. At 436 to 452 the chain is on the extracellular side; it reads YKWANIIVPVHIGNTIK.

Belongs to the ligand-gated ion channel (TC 1.A.9) family. Acetylcholine receptor (TC 1.A.9.1) subfamily. Alpha-5/CHRNA5 sub-subfamily. As to quaternary structure, neuronal AChR that forms heteropentamers composed of two different type of subunits: alpha and non-alpha (beta). CHRNA5/alpha-5 subunit is only able to form functional nAChRs when co-assembled with another alpha subunit, can be combined to CHRNA4/alpha-4 or CHRNA3/alpha-3 and CHRNB4/beta-4 or CHRNB2/beta-2 to give rise to functional receptors. Interacts with LYPD6.

It is found in the synaptic cell membrane. The protein resides in the cell membrane. The catalysed reaction is Ca(2+)(in) = Ca(2+)(out). The enzyme catalyses K(+)(in) = K(+)(out). It catalyses the reaction Na(+)(in) = Na(+)(out). Activated by a myriad of ligands such as acetylcholine, cytisine, nicotine, choline and epibatidine. Component of neuronal acetylcholine receptors (nAChRs) that function as pentameric, ligand-gated cation channels with high calcium permeability among other activities. nAChRs are excitatory neurotrasnmitter receptors formed by a collection of nAChR subunits known to mediate synaptic transmission in the nervous system and the neuromuscular junction. Each nAchR subunit confers differential attributes to channel properties, including activation, deactivation and desensitization kinetics, pH sensitivity, cation permeability, and binding to allosteric modulators. Has an accessory rather than functional role and is only able to form functional nAChRs when co-assembled with another beta subunit. Participates in pentameric assemblies along with CHRNA3, CHRNA4, CHRNB2 and CHRNB4. Increases receptor sensitivity to acetylcholine and nicotine when associated with CHRNA4 and CHRNB2. Plays a role in nicotine addiction. This chain is Neuronal acetylcholine receptor subunit alpha-5 (Chrna5), found in Rattus norvegicus (Rat).